Here is a 23-residue protein sequence, read N- to C-terminus: Acidic phospholipase CHA-E6a (23 aa).

Belongs to the phospholipase A2 family. Group II subfamily. D49 sub-subfamily. The cofactor is Ca(2+). In terms of processing, contains 7 disulfide bonds. Expressed by the venom gland.

The protein resides in the secreted. The catalysed reaction is a 1,2-diacyl-sn-glycero-3-phosphocholine + H2O = a 1-acyl-sn-glycero-3-phosphocholine + a fatty acid + H(+). In terms of biological role, snake venom phospholipase A2 (PLA2) that shows high lipolytic (1048 umol/mg/min) and weak ADP-induced platelet aggregation activities. Also shows weak anticoagulant activity (IC(50) is less than 1.0 uM). PLA2 catalyzes the calcium-dependent hydrolysis of the 2-acyl groups in 3-sn-phosphoglycerides. This is Acidic phospholipase CHA-E6a from Crotalus horridus (Timber rattlesnake).